The chain runs to 421 residues: Gamma-glutamyl phosphate reductase (421 aa).

The protein belongs to the gamma-glutamyl phosphate reductase family.

It localises to the cytoplasm. It carries out the reaction L-glutamate 5-semialdehyde + phosphate + NADP(+) = L-glutamyl 5-phosphate + NADPH + H(+). It functions in the pathway amino-acid biosynthesis; L-proline biosynthesis; L-glutamate 5-semialdehyde from L-glutamate: step 2/2. In terms of biological role, catalyzes the NADPH-dependent reduction of L-glutamate 5-phosphate into L-glutamate 5-semialdehyde and phosphate. The product spontaneously undergoes cyclization to form 1-pyrroline-5-carboxylate. The sequence is that of Gamma-glutamyl phosphate reductase from Roseobacter denitrificans (strain ATCC 33942 / OCh 114) (Erythrobacter sp. (strain OCh 114)).